Reading from the N-terminus, the 385-residue chain is Homoserine O-succinyltransferase (385 aa).

The region spanning 45–355 is the AB hydrolase-1 domain; that stretch reads NAVLVCHALN…SHGHDAFLLD (311 aa). Ser-151 serves as the catalytic Nucleophile. Arg-221 is a substrate binding site. Catalysis depends on residues Asp-316 and His-349. Asp-350 serves as a coordination point for substrate.

This sequence belongs to the AB hydrolase superfamily. MetX family. As to quaternary structure, homodimer.

The protein localises to the cytoplasm. It carries out the reaction L-homoserine + succinyl-CoA = O-succinyl-L-homoserine + CoA. Its pathway is amino-acid biosynthesis; L-methionine biosynthesis via de novo pathway; O-succinyl-L-homoserine from L-homoserine: step 1/1. Its function is as follows. Transfers a succinyl group from succinyl-CoA to L-homoserine, forming succinyl-L-homoserine. The polypeptide is Homoserine O-succinyltransferase (Herminiimonas arsenicoxydans).